The primary structure comprises 681 residues: MRKKLFGQLQRIGKALMLPVAILPAAGLLLAIGTAIQGEALQHYLPFIQNGGVQNVAKLMTAAGSIIFENLPMIFALGVAIGLAGGDGVAAIAAFVGYIIMNKTMGDFLQVTPKNVTDPASGYASILGIPTLQTGVFGGIIIGALAAWCYNKFYNINLPSYLGFFAGKRFVPIMMATTSFILAFPMALIWPTIQSGLNAFSTGLLDSNTGVAVFLFGFIKRLLIPFGLHHIFHAPFWFEFGSWKNAAGEIIHGDQRIFIEQIREGAHLTAGKFMQGEFPVMMFGLPAAALAIYHTAKPENKKVVAGLMGSAALTSFLTGITEPLEFSFLFVAPLLFFIHAVLDGLSFLTLYLLDVHLGYTFSGGFIDYVLLGVLPNKTQWWLVIPVGLVYAVIYYFVFRFLIVKLKYKTPGREDKQSQAVTASATELPYAVLEAMGGKANIKHLDACITRLRVEVNDKSKVDVPGLKDLGASGVLEVGNNMQAIFGPKSDQIKHEMQQIMNGQVVENPTTMEDDKDETVVVAEDKSATSELSHIVHAPLTGEVTPLSEVPDQVFSEKMMGDGIAIKPSQGEVRAPFNGKIQMIFPTKHAIGLVSDSGLELLIHIGLDTVKLNGEGFTLHVEEGQEVKQGDLLINFDLDYIRNHAKSDITPIIVTQGNITNLDFKQGEHGNISFGDQLFEAK.

In terms of domain architecture, PTS EIIC type-1 spans 3–414; that stretch reads KKLFGQLQRI…LKYKTPGRED (412 aa). The next 10 membrane-spanning stretches (helical) occupy residues 16–36, 73–93, 126–146, 170–190, 199–219, 273–293, 303–323, 328–348, 355–375, and 383–403; these read LMLP…GTAI, MIFA…AAIA, ILGI…GALA, FVPI…ALIW, AFST…FGFI, FMQG…LAIY, VVAG…ITEP, FLFV…LSFL, VHLG…GVLP, and VIPV…FLIV. Positions 425-506 constitute a PTS EIIB type-1 domain; that stretch reads TELPYAVLEA…QQIMNGQVVE (82 aa). C447 functions as the Phosphocysteine intermediate; for EIIB activity in the catalytic mechanism. In terms of domain architecture, PTS EIIA type-1 spans 551–655; it reads DQVFSEKMMG…SDITPIIVTQ (105 aa). Catalysis depends on H603, which acts as the Tele-phosphohistidine intermediate; for EIIA activity.

It is found in the cell membrane. The catalysed reaction is N(pros)-phospho-L-histidyl-[protein] + D-glucose(out) = D-glucose 6-phosphate(in) + L-histidyl-[protein]. In terms of biological role, the phosphoenolpyruvate-dependent sugar phosphotransferase system (sugar PTS), a major carbohydrate active transport system, catalyzes the phosphorylation of incoming sugar substrates concomitantly with their translocation across the cell membrane. This system is involved in glucose transport. In Staphylococcus aureus (strain JH9), this protein is PTS system glucose-specific EIICBA component (ptsG).